The sequence spans 370 residues: tRNA-specific 2-thiouridylase MnmA (370 aa).

ATP contacts are provided by residues 19–26 (AMSGGVDS) and L45. C113 (nucleophile) is an active-site residue. C113 and C209 are oxidised to a cystine. Residue G137 participates in ATP binding. An interaction with tRNA region spans residues 159–161 (RDQ). C209 acts as the Cysteine persulfide intermediate in catalysis.

Belongs to the MnmA/TRMU family.

The protein localises to the cytoplasm. The enzyme catalyses S-sulfanyl-L-cysteinyl-[protein] + uridine(34) in tRNA + AH2 + ATP = 2-thiouridine(34) in tRNA + L-cysteinyl-[protein] + A + AMP + diphosphate + H(+). Catalyzes the 2-thiolation of uridine at the wobble position (U34) of tRNA, leading to the formation of s(2)U34. This Zymomonas mobilis subsp. mobilis (strain ATCC 31821 / ZM4 / CP4) protein is tRNA-specific 2-thiouridylase MnmA.